Here is a 253-residue protein sequence, read N- to C-terminus: tRNA1(Val) (adenine(37)-N6)-methyltransferase (253 aa).

It belongs to the methyltransferase superfamily. tRNA (adenine-N(6)-)-methyltransferase family.

Its subcellular location is the cytoplasm. It catalyses the reaction adenosine(37) in tRNA1(Val) + S-adenosyl-L-methionine = N(6)-methyladenosine(37) in tRNA1(Val) + S-adenosyl-L-homocysteine + H(+). Its function is as follows. Specifically methylates the adenine in position 37 of tRNA(1)(Val) (anticodon cmo5UAC). The chain is tRNA1(Val) (adenine(37)-N6)-methyltransferase from Dickeya chrysanthemi (strain Ech1591) (Dickeya zeae (strain Ech1591)).